Here is a 392-residue protein sequence, read N- to C-terminus: Cellobiose 2-epimerase (392 aa).

This sequence belongs to the cellobiose 2-epimerase family.

It carries out the reaction D-cellobiose = beta-D-glucosyl-(1-&gt;4)-D-mannopyranose. In terms of biological role, catalyzes the reversible epimerization of cellobiose to 4-O-beta-D-glucopyranosyl-D-mannose (Glc-Man). Can also epimerize cellotriose to Glc-Glc-Man, cellotetraose to Glc-Glc-Glc-Man, lactose to epilactose, and mannobiose to 4-O-beta-D-mannopyranosyl-D-glucopyranose (Man-Glc). May function as a mannobiose 2-epimerase in vivo and be involved in a mannan catabolic pathway which feeds into glycolysis. The protein is Cellobiose 2-epimerase (bfce) of Bacteroides fragilis (strain ATCC 25285 / DSM 2151 / CCUG 4856 / JCM 11019 / LMG 10263 / NCTC 9343 / Onslow / VPI 2553 / EN-2).